We begin with the raw amino-acid sequence, 50 residues long: Photosystem II reaction center protein K (50 aa).

Positions 1–13 are excised as a propeptide; that stretch reads MLNLNFTNITVMG. Residues 25–45 form a helical membrane-spanning segment; that stretch reads IVDILPIIPILFFLLAFVWQA.

Belongs to the PsbK family. PSII is composed of 1 copy each of membrane proteins PsbA, PsbB, PsbC, PsbD, PsbE, PsbF, PsbH, PsbI, PsbJ, PsbK, PsbL, PsbM, PsbT, PsbY, PsbZ, Psb30/Ycf12, at least 3 peripheral proteins of the oxygen-evolving complex and a large number of cofactors. It forms dimeric complexes.

It localises to the plastid. The protein localises to the chloroplast thylakoid membrane. Its function is as follows. One of the components of the core complex of photosystem II (PSII). PSII is a light-driven water:plastoquinone oxidoreductase that uses light energy to abstract electrons from H(2)O, generating O(2) and a proton gradient subsequently used for ATP formation. It consists of a core antenna complex that captures photons, and an electron transfer chain that converts photonic excitation into a charge separation. The sequence is that of Photosystem II reaction center protein K from Euglena myxocylindracea.